We begin with the raw amino-acid sequence, 92 residues long: Small ribosomal subunit protein uS19 (92 aa).

This sequence belongs to the universal ribosomal protein uS19 family.

In terms of biological role, protein S19 forms a complex with S13 that binds strongly to the 16S ribosomal RNA. This chain is Small ribosomal subunit protein uS19, found in Roseobacter denitrificans (strain ATCC 33942 / OCh 114) (Erythrobacter sp. (strain OCh 114)).